We begin with the raw amino-acid sequence, 128 residues long: Small ribosomal subunit protein bS6 (128 aa).

Belongs to the bacterial ribosomal protein bS6 family.

Its function is as follows. Binds together with bS18 to 16S ribosomal RNA. The chain is Small ribosomal subunit protein bS6 from Thermotoga sp. (strain RQ2).